Consider the following 209-residue polypeptide: Large ribosomal subunit protein uL4 (209 aa).

The disordered stretch occupies residues 46 to 76 (RGTASTKTRGEVSGGGRKPWRQKGTGRARHG). A compositionally biased stretch (basic residues) spans 63 to 76 (KPWRQKGTGRARHG).

Belongs to the universal ribosomal protein uL4 family. As to quaternary structure, part of the 50S ribosomal subunit.

Functionally, one of the primary rRNA binding proteins, this protein initially binds near the 5'-end of the 23S rRNA. It is important during the early stages of 50S assembly. It makes multiple contacts with different domains of the 23S rRNA in the assembled 50S subunit and ribosome. Forms part of the polypeptide exit tunnel. The polypeptide is Large ribosomal subunit protein uL4 (Halothermothrix orenii (strain H 168 / OCM 544 / DSM 9562)).